We begin with the raw amino-acid sequence, 534 residues long: Bifunctional purine biosynthesis protein PurH (534 aa).

The region spanning 6–151 (TRLPIRRALI…KNHKDVAIVV (146 aa)) is the MGS-like domain.

The protein belongs to the PurH family.

It carries out the reaction (6R)-10-formyltetrahydrofolate + 5-amino-1-(5-phospho-beta-D-ribosyl)imidazole-4-carboxamide = 5-formamido-1-(5-phospho-D-ribosyl)imidazole-4-carboxamide + (6S)-5,6,7,8-tetrahydrofolate. The catalysed reaction is IMP + H2O = 5-formamido-1-(5-phospho-D-ribosyl)imidazole-4-carboxamide. The protein operates within purine metabolism; IMP biosynthesis via de novo pathway; 5-formamido-1-(5-phospho-D-ribosyl)imidazole-4-carboxamide from 5-amino-1-(5-phospho-D-ribosyl)imidazole-4-carboxamide (10-formyl THF route): step 1/1. It participates in purine metabolism; IMP biosynthesis via de novo pathway; IMP from 5-formamido-1-(5-phospho-D-ribosyl)imidazole-4-carboxamide: step 1/1. This chain is Bifunctional purine biosynthesis protein PurH, found in Pseudomonas syringae pv. tomato (strain ATCC BAA-871 / DC3000).